The primary structure comprises 237 residues: MTSEITYAEVRFKNEFKSSGINTASSAASKERTAPHKSNTGFPKLLCASLLIFFLLLAISFFIAFVIFFQKYSQLLEKKTTKELVHTTLECVKKNMPVEETAWSCCPKNWKSFSSNCYFISTESASWQDSEKDCARMEAHLLVINTQEEQDFIFQNLQEESAYFVGLSDPEGQRHWQWVDQTPYNESSTFWHPREPSDPNERCVVLNFRKSPKRWGWNDVNCLGPQRSVCEMMKIHL.

Over 1-48 the chain is Cytoplasmic; that stretch reads MTSEITYAEVRFKNEFKSSGINTASSAASKERTAPHKSNTGFPKLLCA. The ITIM motif motif lies at 5–10; it reads ITYAEV. Residues 49–69 traverse the membrane as a helical; Signal-anchor for type II membrane protein segment; it reads SLLIFFLLLAISFFIAFVIFF. Over 70–237 the chain is Extracellular; the sequence is QKYSQLLEKK…SVCEMMKIHL (168 aa). Intrachain disulfides connect Cys106-Cys117, Cys134-Cys230, and Cys203-Cys222. In terms of domain architecture, C-type lectin spans 113 to 231; sequence FSSNCYFIST…CLGPQRSVCE (119 aa). Ca(2+) is bound by residues Val143, Asn145, and Glu149. A glycan (N-linked (GlcNAc...) asparagine) is linked at Asn185. Residues Glu195, Ser197, and Glu201 each coordinate Ca(2+). Residues 195 to 197 and Glu201 contribute to the alpha-D-mannopyranose site; that span reads EPS. 207–209 serves as a coordination point for N-acetyl-D-glucosamine; sequence NFR. 3 residues coordinate Ca(2+): Asn218, Asp219, and Glu231.

In terms of assembly, may interact with PTPN6 via its ITIM motif. Expressed preferentially in hematopoietic tissues. Expressed in all circulating Ag-presenting cells such as dendritic cells, myeloid cells, monocytes, macrophages, B-cells and epidermal Langerhans cells (at protein level). Expressed in peripheral blood leukocytes, neutrophils, moderate quantities in spleen, lymph node, and bone marrow, and at very low levels in thymus.

It localises to the cell membrane. C-type lectin receptor that binds carbohydrates mannose and fucose but also weakly interacts with N-acetylglucosamine (GlcNAc) in a Ca(2+)-dependent manner. Involved in regulating immune reactivity. Once triggered by antigen, it is internalized by clathrin-dependent endocytosis and delivers its antigenic cargo into the antigen presentation pathway resulting in cross-priming of CD8(+) T cells. This cross-presentation and cross-priming are enhanced by TLR7 and TLR8 agonists with increased expansion of the CD8(+) T cells, high production of IFNG and TNF with reduced levels of IL4, IL5 and IL13. In plasmacytoid dendritic cells, inhibits TLR9-mediated IFNA and TNF production. May be involved via its ITIM motif (immunoreceptor tyrosine-based inhibitory motifs) in the inhibition of B-cell-receptor-mediated calcium mobilization and protein tyrosine phosphorylation. Functionally, (Microbial infection) Involved in the interaction between HIV-1 virus and dendritic cells. Enhances HIV-1 binding/entry and virus infection. Requires ITIM motif-associated signal transduction pathway involving phosphatases PTPN6 and PTPN11, SYK, Src kinases and MAP kinases. The polypeptide is C-type lectin domain family 4 member A (Homo sapiens (Human)).